Reading from the N-terminus, the 115-residue chain is Salivary protein gSG6 (115 aa).

The first 28 residues, 1-28 (MAIRVELLLAMVLLPLLLLESVVPHAAA), serve as a signal peptide directing secretion.

In terms of tissue distribution, female saliva (at protein level). Distal-lateral lobes of female salivary gland (at protein level). Not detected in male salivary gland (at protein level).

It is found in the secreted. Functionally, required for efficient probing and blood feeding. In Anopheles gambiae (African malaria mosquito), this protein is Salivary protein gSG6.